The sequence spans 432 residues: Glutamate-1-semialdehyde 2,1-aminomutase (432 aa).

At Lys-267 the chain carries N6-(pyridoxal phosphate)lysine.

The protein belongs to the class-III pyridoxal-phosphate-dependent aminotransferase family. HemL subfamily. Homodimer. It depends on pyridoxal 5'-phosphate as a cofactor.

The protein resides in the cytoplasm. The enzyme catalyses (S)-4-amino-5-oxopentanoate = 5-aminolevulinate. It participates in porphyrin-containing compound metabolism; protoporphyrin-IX biosynthesis; 5-aminolevulinate from L-glutamyl-tRNA(Glu): step 2/2. The sequence is that of Glutamate-1-semialdehyde 2,1-aminomutase from Syntrophus aciditrophicus (strain SB).